Here is a 246-residue protein sequence, read N- to C-terminus: Ribonuclease PH (246 aa).

Phosphate contacts are provided by residues arginine 91 and 129–131 (GTR).

The protein belongs to the RNase PH family. Homohexameric ring arranged as a trimer of dimers.

It catalyses the reaction tRNA(n+1) + phosphate = tRNA(n) + a ribonucleoside 5'-diphosphate. In terms of biological role, phosphorolytic 3'-5' exoribonuclease that plays an important role in tRNA 3'-end maturation. Removes nucleotide residues following the 3'-CCA terminus of tRNAs; can also add nucleotides to the ends of RNA molecules by using nucleoside diphosphates as substrates, but this may not be physiologically important. Probably plays a role in initiation of 16S rRNA degradation (leading to ribosome degradation) during starvation. The sequence is that of Ribonuclease PH from Paraburkholderia phytofirmans (strain DSM 17436 / LMG 22146 / PsJN) (Burkholderia phytofirmans).